A 138-amino-acid chain; its full sequence is Large ribosomal subunit protein bL17 (138 aa).

The protein belongs to the bacterial ribosomal protein bL17 family. In terms of assembly, part of the 50S ribosomal subunit. Contacts protein L32.

This is Large ribosomal subunit protein bL17 from Solidesulfovibrio magneticus (strain ATCC 700980 / DSM 13731 / RS-1) (Desulfovibrio magneticus).